A 343-amino-acid polypeptide reads, in one-letter code: Phosphatidylglycerol--prolipoprotein diacylglyceryl transferase 1 (343 aa).

4 helical membrane-spanning segments follow: residues 19–39 (VPLRGYAFCIIIGVFVAVWLG), 54–74 (ADIAVWAVPFGLIGGRLYHVI), 93–113 (IWEGGLGIWGAIAFGAVGAWI), and 119–139 (GVPMPAYADAVAPGIALAQAI). A 1,2-diacyl-sn-glycero-3-phospho-(1'-sn-glycerol) is bound at residue R141. 3 helical membrane passes run 176–196 (HPTFLYESLWCIGVALLVIWA), 202–224 (LGHGRAFALYVAAYCAGRFWIEY), and 238–258 (LNNWTALFVFLLAVLYIVLSA). The disordered stretch occupies residues 269–343 (EPGAETAAGD…TNGADSAKKG (75 aa)). A compositionally biased stretch (basic and acidic residues) spans 283-293 (ADKDVKGTKDA). The segment covering 314–324 (APEDTSGADEA) has biased composition (acidic residues).

Belongs to the Lgt family.

The protein resides in the cell membrane. The enzyme catalyses L-cysteinyl-[prolipoprotein] + a 1,2-diacyl-sn-glycero-3-phospho-(1'-sn-glycerol) = an S-1,2-diacyl-sn-glyceryl-L-cysteinyl-[prolipoprotein] + sn-glycerol 1-phosphate + H(+). It participates in protein modification; lipoprotein biosynthesis (diacylglyceryl transfer). Its function is as follows. Catalyzes the transfer of the diacylglyceryl group from phosphatidylglycerol to the sulfhydryl group of the N-terminal cysteine of a prolipoprotein, the first step in the formation of mature lipoproteins. This is Phosphatidylglycerol--prolipoprotein diacylglyceryl transferase 1 from Streptomyces coelicolor (strain ATCC BAA-471 / A3(2) / M145).